A 1146-amino-acid polypeptide reads, in one-letter code: Lysine-specific demethylase 2A (1146 aa).

In terms of domain architecture, JmjC spans 146-314 (FSHTKLENLV…MQLRIYSIED (169 aa)). Residue T207 coordinates substrate. Fe cation-binding residues include H210 and D212. Residue K227 participates in substrate binding. H282 lines the Fe cation pocket. Disordered stretches follow at residues 363–467 (LNGR…PDSP) and 554–585 (TKPHTMRPASRHSTAPPRTSGTPSGTTASSGA). Residues 373-387 (SSSSSSSSSGLSSSS) show a composition bias toward low complexity. Over residues 388-401 (DNDDSSDQDWEEEE) the composition is skewed to acidic residues. Residues 402–442 (GLRKRERDRCRVERELQRKRNRDRQQRDQERDRHGRTERII) show a composition bias toward basic and acidic residues. Positions 453–467 (LTPPPSLPLPTPDSP) are enriched in pro residues. A compositionally biased stretch (low complexity) spans 566–584 (STAPPRTSGTPSGTTASSG). The CXXC-type zinc-finger motif lies at 585–631 (ARRRRVRCRKCQACVQRECGTCHYCKDMKKFGGPGRMKQSCVLRQCL). Positions 592, 595, 598, 603, 606, 609, 625, and 630 each coordinate Zn(2+). A PHD-type zinc finger spans residues 638–699 (SVTCALCGEV…YWECPKCYEG (62 aa)). 2 disordered regions span residues 733 to 800 (VLRP…EGDR) and 832 to 867 (TPNPRQPIRAAPLHQDEEREEEEEEEEEEEETENVM). Pro residues predominate over residues 739–762 (GQSPPSPPLLLLPPSPSSAPPTPP). The segment covering 772–789 (SREERAKRRQLAREKENH) has biased composition (basic and acidic residues). Residues 849-864 (EREEEEEEEEEEEETE) show a composition bias toward acidic residues. Positions 874–919 (STSMQKDVWLSVFHYLTHEELCICMRVCKAWYKWGCDKRLWSRIDV) constitute an F-box domain. LRR repeat units follow at residues 945–966 (WTNVSKKQLIWLINRLPGLKDL), 968–994 (LAGCTWSAVSALASCSCPLLRTLDLRW), 1032–1057 (GLDISDVTLRLIIRHCPLLSKLDLSH), 1058–1087 (CPLLSDQSVNLLTAVGSSTRGTLTHIHLAG), 1088–1112 (CKGVTDESLLYLRRATNLSLIDLHG), and 1113–1138 (CKQVTRGACEEFISDLSVSTLYCLSD).

The protein belongs to the JHDM1 histone demethylase family. It depends on Fe(2+) as a cofactor.

The protein resides in the nucleus. The protein localises to the nucleoplasm. The catalysed reaction is N(6),N(6)-dimethyl-L-lysyl(36)-[histone H3] + 2 2-oxoglutarate + 2 O2 = L-lysyl(36)-[histone H3] + 2 formaldehyde + 2 succinate + 2 CO2. Its function is as follows. Histone demethylase that specifically demethylates 'Lys-36' of histone H3, thereby playing a central role in histone code. Preferentially demethylates dimethylated H3 'Lys-36' residue while it has weak or no activity for mono- and tri-methylated H3 'Lys-36'. May also recognize and bind to some phosphorylated proteins and promote their ubiquitination and degradation. Required to maintain the heterochromatic state. Associates with centromeres and represses transcription of small non-coding RNAs that are encoded by the clusters of satellite repeats at the centromere. Required to sustain centromeric integrity and genomic stability, particularly during mitosis. May play a role in the regulation of circadian gene expression. This is Lysine-specific demethylase 2A (kdm2a) from Xenopus tropicalis (Western clawed frog).